The following is an 83-amino-acid chain: Small ribosomal subunit protein bS18 (83 aa).

The protein belongs to the bacterial ribosomal protein bS18 family. As to quaternary structure, part of the 30S ribosomal subunit. Forms a tight heterodimer with protein bS6.

Its function is as follows. Binds as a heterodimer with protein bS6 to the central domain of the 16S rRNA, where it helps stabilize the platform of the 30S subunit. In Desulfosudis oleivorans (strain DSM 6200 / JCM 39069 / Hxd3) (Desulfococcus oleovorans), this protein is Small ribosomal subunit protein bS18.